The following is a 425-amino-acid chain: Malate transporter MleP (425 aa).

Transmembrane regions (helical) follow at residues 11-31 (GISL…TLLG), 35-55 (LDMV…YFIG), 65-85 (LGGG…FHIV), 96-116 (FMGG…CGSI), 134-154 (IALI…MLIG), 196-216 (IFSQ…IGAL), 246-266 (IKLD…LLMA), 269-289 (ILNK…IVFI), 310-330 (VIMT…LIDL), 339-359 (WQFV…SWFL), and 401-421 (FAQM…GILI).

The protein belongs to the 2-hydroxycarboxylate transporter (2-HCT) (TC 2.A.24) family.

Its subcellular location is the cell membrane. It carries out the reaction (S)-lactate(in) + (S)-malate(out) = (S)-lactate(out) + (S)-malate(in). The catalysed reaction is (R)-lactate(in) + (S)-malate(out) = (R)-lactate(out) + (S)-malate(in). The enzyme catalyses glycolate(in) + (S)-malate(out) = glycolate(out) + (S)-malate(in). In terms of biological role, secondary transporter involved in malolactic fermentation. Catalyzes the uptake of divalent malate into the cell coupled to the exit of monovalent lactate, a product of malate degradation (precursor/product exchange). The malate/lactate exchange is electrogenic and results in the generation of a membrane potential. Is highly selective for the S-enantiomer of malate. In the absence of lactate, MleP can also catalyze the proton-dependent transport of malate. In vitro, transports a range of substrates that contain the 2-hydroxycarboxylate motif, HO-CR(2)-COO(-), with a preference for malate, lactate and glycolate. Modification of the OH or the COO(-) groups of the 2-hydroxycarboxylate motif drastically reduces the affinity of the transporter for the substrates, indicating their relevance in substrate recognition. Significant activity is also observed with some 2-oxocarboxylates. Transports only poorly citromalate. Citrate binds to MleP but is not translocated. The sequence is that of Malate transporter MleP from Lactococcus lactis subsp. lactis (strain IL1403) (Streptococcus lactis).